A 226-amino-acid chain; its full sequence is Glutathione peroxidase 3 (226 aa).

A signal peptide spans 1–24 (MARILRASCLLSLLLAGFVPPGRG). The active site involves U73. A non-standard amino acid (selenocysteine) is located at residue U73.

It belongs to the glutathione peroxidase family. Homotetramer. Secreted in plasma.

Its subcellular location is the secreted. It catalyses the reaction 2 glutathione + H2O2 = glutathione disulfide + 2 H2O. It carries out the reaction tert-butyl hydroperoxide + 2 glutathione = tert-butanol + glutathione disulfide + H2O. Its function is as follows. Protects cells and enzymes from oxidative damage, by catalyzing the reduction of hydrogen peroxide, lipid peroxides and organic hydroperoxide, by glutathione. The chain is Glutathione peroxidase 3 from Mus musculus (Mouse).